Reading from the N-terminus, the 545-residue chain is Calcium-dependent protein kinase 6 (545 aa).

Glycine 2 is lipidated: N-myristoyl glycine. Low complexity predominate over residues 34-43 (CSSTSTATSS). The segment at 34–58 (CSSTSTATSSGGRMPIRSHQQRLSS) is disordered. Residues 74–332 (YTVGRKLGQG…AHQVLCHPWV (259 aa)) form the Protein kinase domain. ATP contacts are provided by residues 80 to 88 (LGQGQFGTT) and lysine 103. Aspartate 198 serves as the catalytic Proton acceptor. The autoinhibitory domain stretch occupies residues 338 to 368 (APDRPLAPAVLSRLKQFSAMNRLKKMALRVI). 4 consecutive EF-hand domains span residues 375–410 (EELAGLKEMFKAMDTDASGAITFDELKEGLRRYGSN), 411–446 (LREAEIRDLMDAADVDKSGTIDYDEFIAATVHLNKL), 447–482 (EREEHLLAAFAYFDRDGSGYITVDELEHACRDHNMA), and 486–516 (IDDIIREVDQDNDGRIDYGEFVAMMKKGAID). The Ca(2+) site is built by aspartate 388, aspartate 390, serine 392, glutamate 399, aspartate 424, aspartate 426, serine 428, threonine 430, glutamate 435, aspartate 460, aspartate 462, serine 464, tyrosine 466, glutamate 471, aspartate 494, aspartate 496, aspartate 498, arginine 500, and glutamate 505. The segment at 526-545 (GRPTTATSDDPSPTISSSSR) is disordered. Positions 528–545 (PTTATSDDPSPTISSSSR) are enriched in low complexity.

Belongs to the protein kinase superfamily. Ser/Thr protein kinase family. CDPK subfamily.

Its subcellular location is the membrane. The enzyme catalyses L-seryl-[protein] + ATP = O-phospho-L-seryl-[protein] + ADP + H(+). The catalysed reaction is L-threonyl-[protein] + ATP = O-phospho-L-threonyl-[protein] + ADP + H(+). Its activity is regulated as follows. Activated by calcium. Autophosphorylation may play an important role in the regulation of the kinase activity. May play a role in signal transduction pathways that involve calcium as a second messenger. This is Calcium-dependent protein kinase 6 from Oryza sativa subsp. japonica (Rice).